An 842-amino-acid chain; its full sequence is Cullin-8 (842 aa).

The segment at Met1 to Phe50 is required for interaction with MMS1. A compositionally biased stretch (polar residues) spans Leu755–Thr765. Positions Leu755–Ser775 are disordered. Lys791 participates in a covalent cross-link: Glycyl lysine isopeptide (Lys-Gly) (interchain with G-Cter in NEDD8).

Belongs to the cullin family. As to quaternary structure, component of multiple cullin-RING ligases (CRLs) composed of 4 subunits: the RING protein HRT1, the cullin RTT101, a linker protein MMS1, and one of many alternative substrate receptors belonging to a protein family described as DCAF (DDB1- and CUL4-associated factor). Component of a RTT101(MMS1-MMS22) complex with the substrate receptor MMS22. This complex further interacts with RTT107 and CTF4 to form RTT101-MMS1-MMS22-RTT107 and RTT101-MMS1-MMS22-CTF4 complexes respectively. Component of a RTT101(MSS1-CRT10) complex with the substrate receptor CRT10. Component of a RTT101(MSS1-ESC2) complex with the potential substrate receptor ESC2. Component of a RTT101(MSS1-ORC5) complex with the potential substrate receptor ORC5. Interacts (via C-ter) with HRT1; required for ubiquitin-ligase activity. Interacts (via N-ter) with MMS1. Post-translationally, neddylated. HRT1-binding is necessary for RUB1/NEDD8 modification of RTT101. The modification enhances ubiquitin-ligase activity.

The protein localises to the cytoplasm. It is found in the nucleus. It participates in protein modification; protein ubiquitination. Functionally, core component of multiple cullin-RING-based E3 ubiquitin-protein ligase complexes (CRLs), which mediate the ubiquitination of target proteins. As a scaffold protein may contribute to catalysis through positioning of the substrate and the ubiquitin-conjugating enzyme. The CRL associates with CDC34 as the E2 ubiquitin-conjugating enzyme. The functional specificity of the CRL depends on the type of the associated substrate receptor protein. RTT101(MMS1-MMS22) promotes fork progression through damaged DNA or natural pause sites by stabilizing replication proteins like the replication fork-pausing complex (FPC) and leading-strand polymerase at stalled replication forks. RTT101(MMS1-MMS22) ubiquitinates the acetylated histones H3K56ac-H4 at lysine residues H3K121, H3K122 and H3K125. Ubiquitination is required for efficient histone deposition during replication-coupled nucleosome assembly, probably by facilitating the transfer of H3-H4 from ASF1 to other chaperones involved in histone deposition. RTT101(MMS1-CRT10) may regulate nucleotide synthesis through transcriptional regulation of ribonucleotide reductase. RTT101(MMS1) is also involved in the non-functional rRNA decay (NRD) of 25S rRNA through the selective, ubiquitination-dependent degradation of nonfunctional ribosomal particles. Ubiquitinates the FACT (facilitates chromatin transcription) complex subunit SPT16 in an MMS1-independent manner. Involved in regulation of Ty1 transposition and protects the genome from Ty1 integration upstream of tRNA genes. This chain is Cullin-8 (RTT101), found in Saccharomyces cerevisiae (strain ATCC 204508 / S288c) (Baker's yeast).